The sequence spans 175 residues: Putative lipoprotein LppP (175 aa).

The signal sequence occupies residues 1–30; it reads MRRQRSAVPILALLALLALLALIVGLGASG. The N-palmitoyl cysteine moiety is linked to residue Cys-31. Cys-31 carries S-diacylglycerol cysteine lipidation.

It localises to the cell membrane. The sequence is that of Putative lipoprotein LppP (lppP) from Mycobacterium bovis (strain ATCC BAA-935 / AF2122/97).